Consider the following 404-residue polypeptide: Phosphoglycerate kinase (404 aa).

Substrate is bound by residues 22-24 (DLN), Arg-37, 60-63 (HLGR), Arg-119, and Arg-156. Residues Lys-206, Gly-302, Glu-333, and 359-362 (GGDS) each bind ATP.

This sequence belongs to the phosphoglycerate kinase family. Monomer.

Its subcellular location is the cytoplasm. It catalyses the reaction (2R)-3-phosphoglycerate + ATP = (2R)-3-phospho-glyceroyl phosphate + ADP. It functions in the pathway carbohydrate degradation; glycolysis; pyruvate from D-glyceraldehyde 3-phosphate: step 2/5. This chain is Phosphoglycerate kinase, found in Clavibacter michiganensis subsp. michiganensis (strain NCPPB 382).